A 386-amino-acid chain; its full sequence is S-adenosylmethionine synthase (386 aa).

Histidine 16 serves as a coordination point for ATP. Position 18 (aspartate 18) interacts with Mg(2+). Glutamate 44 contacts K(+). Residues glutamate 57 and glutamine 100 each contribute to the L-methionine site. Residues 100–110 (QSRDITQGVDR) form a flexible loop region. ATP-binding positions include 165 to 167 (DAK), aspartate 240, 246 to 247 (RK), alanine 263, and lysine 267. Aspartate 240 provides a ligand contact to L-methionine. Lysine 271 serves as a coordination point for L-methionine.

Belongs to the AdoMet synthase family. In terms of assembly, homotetramer; dimer of dimers. It depends on Mg(2+) as a cofactor. K(+) serves as cofactor.

It localises to the cytoplasm. The enzyme catalyses L-methionine + ATP + H2O = S-adenosyl-L-methionine + phosphate + diphosphate. It functions in the pathway amino-acid biosynthesis; S-adenosyl-L-methionine biosynthesis; S-adenosyl-L-methionine from L-methionine: step 1/1. In terms of biological role, catalyzes the formation of S-adenosylmethionine (AdoMet) from methionine and ATP. The overall synthetic reaction is composed of two sequential steps, AdoMet formation and the subsequent tripolyphosphate hydrolysis which occurs prior to release of AdoMet from the enzyme. This chain is S-adenosylmethionine synthase, found in Francisella tularensis subsp. tularensis (strain WY96-3418).